The chain runs to 958 residues: MutS protein homolog 4 (958 aa).

Disordered stretches follow at residues Gln51–Asn110 and Pro124–Gln161. Residues Ser91–Ser107 are compositionally biased toward low complexity. Polar residues-rich tracts occupy residues Pro124–Pro138 and Ser146–Gln161. Gly702 to Ser709 is a binding site for ATP.

Belongs to the DNA mismatch repair MutS family. In terms of assembly, heterooligomer of MSH4 and MSH5. Predominantly expressed in testis.

It localises to the chromosome. Its function is as follows. Involved in meiotic recombination. Required for reciprocal recombination and proper segregation of homologous chromosomes at meiosis. This is MutS protein homolog 4 (Msh4) from Mus musculus (Mouse).